We begin with the raw amino-acid sequence, 403 residues long: Glucose-signaling factor 2 (403 aa).

Topologically, residues 1–177 (MEIYIRLNAD…QEVQANYSSL (177 aa)) are lumenal. Asparagine 89 and asparagine 173 each carry an N-linked (GlcNAc...) asparagine glycan. A helical; Signal-anchor for type II membrane protein transmembrane segment spans residues 178–198 (VAQWLFFVMHIFKVGIITLFL). Topologically, residues 199–403 (KLGIANPISF…IKKNDLKKSN (205 aa)) are cytoplasmic. The stretch at 330-388 (ELENNLKKILEEYDGDIGKMNAEIRRFRRFGIYEPDEKLASLVKLRREIADEKEKASNN) forms a coiled coil.

It is found in the endoplasmic reticulum membrane. Its function is as follows. May be involved in the secretion of hexose transporters from the endoplasmic reticulum. Involved in secretion of GAL2 and HXT1. This is Glucose-signaling factor 2 (GSF2) from Saccharomyces cerevisiae (strain ATCC 204508 / S288c) (Baker's yeast).